Here is a 1403-residue protein sequence, read N- to C-terminus: MRLGAAWALLLAAALGLGTRGVRAAVALADFYPFGTKRGDTVTPKQDDGGSGLQPLSVPFPFFGAEHSGLYVNNNGIISFLKEVSQFTPVAFPIAKDRCVVAAFWADVDNRRAGDVYYREATDPAMLNRATEDIRRYFPELPDFSATWVFVATWYRVTFFGGSSSSPVNTFQTVLITDGRFSFTIFNYESILWTTGTHASSGGDTDGLGGIAAQAGFNAGDGHRYFNIPGSRTADMAEVETTTNVGVPGRWAFRIDDAQVRVGGCGHTTSVCLVLRPCLNGGKCIDDCVTGNPSYTCSCLAGFTGRRCHLDVNECASHPCQNGGTCTHGVNSFSCQCPAGFKGPTCESAQSPCDNKVCQNGGQCQAESSSAVCVCQAGYTGATCETDVDECSSDPCQNGGSCVDLVGNYSCICVEPFEGPQCETGSYLVPSPCLSNPCQNGGTCVDADEGYVCECPEGFMGLDCRERILNDCDCRNGGRCLGANTTLCQCPPGFFGLLCEFEVTATPCNMNTQCPDGGYCMEYGGSYLCVCHTDHNISHSLPSPCDSDPCFNGGSCDAHEDSYTCECPRGFHGRHCEKARPHLCSSGPCRNGGTCKEMGDEYRCTCPYRFTGRHCEIGKPDSCASGPCHNGGTCFHYIGKYKCDCPPGFSGRHCEIAPSPCFRSPCMNGGTCEDLGTDFSCYCQPGYTGHRCQAEVDCGHPEEVEHATMRFNGTHVGSVALYTCEPGFSLSALSHIRVCQPQGVWSQPPQCIEVDECRSQPCLHGGSCQDLIADYQCLCSPGYEGVHCELETDECQAQPCRNGGSCRDLPRAFICQCPEGFVGIHCETEVDACASSPCQHGGRCEDGGGAYLCVCPEGFFGYNCETVSDPCFSSPCGSRGYCLASNGSHSCTCKVGYTGKDCTKELLPPTALRVERVEESGVSISWSPPEGTTARQVLDGYAVTYASSDGSSRRTDFVDRSRSSHQLRALAAGRAYNISVFSVKRNTNNKNDISRPAALLTRTRPRPIEDFEVTNISANAISVQWALHRIQHATVSRVRVSILYPEASAVQSTEVDRSVDRLTFGDLLPGRRYTVRLTTLSGPGGAEYPTESLASAPLNVWTRPLPPANLTASRVTATSAHMIWDTPAPGISLEAYVINVTTSQSTKSRYIPNGKLVSYTVRDLMPGRRYQLSVTAVQSTEQGQLHSEPAHLYIITSPRDGTDRRWHHGGHHSRMLRNRPAPVRLPELRLLNDHSAPETPTQSSRFSELVDGRGRVSARFGGLPSRAVTVRSQPTTPVPLKNTEAPEQVHLALQLPKNSSKDTESTPGSCSEDACQNGGTCVPGADAHSCDCRPGFKGRHCELACEKVPRPCTRLFSETKSFPVWEGDICHHVYKKVYKVHQDVCFKERCQSTSLRKPKQETK.

The signal sequence occupies residues 1–24 (MRLGAAWALLLAAALGLGTRGVRA). The NIDO domain occupies 103 to 258 (AFWADVDNRR…GRWAFRIDDA (156 aa)). EGF-like domains follow at residues 268-309 (TTSV…RRCH), 311-347 (DVNE…PTCE), and 349-385 (AQSP…ATCE). Cystine bridges form between C272–C284, C278–C297, C299–C308, C315–C326, C320–C335, C337–C346, C353–C364, C358–C373, C375–C384, C391–C402, C396–C411, C413–C422, C433–C444, C438–C453, C455–C464, C472–C480, C474–C488, and C490–C499. N-linked (GlcNAc...) asparagine glycosylation occurs at N292. Positions 387-423 (DVDECSSDPCQNGGSCVDLVGNYSCICVEPFEGPQCE) constitute an EGF-like 4; calcium-binding domain. N408 carries an N-linked (GlcNAc...) asparagine glycan. EGF-like domains lie at 429–465 (VPSP…LDCR) and 468–500 (ILND…LLCE). N484 is a glycosylation site (N-linked (GlcNAc...) asparagine). N536 carries an N-linked (GlcNAc...) asparagine glycan. 4 consecutive EGF-like domains span residues 541–577 (LPSP…RHCE), 580–616 (RPHL…RHCE), 619–655 (KPDS…RHCE), and 657–693 (APSP…HRCQ). Cystine bridges form between C545–C556, C550–C565, C567–C576, C584–C595, C589–C604, C606–C615, C623–C634, C628–C643, C645–C654, C661–C672, C666–C681, C683–C692, C698–C739, C724–C751, C757–C768, C762–C777, C779–C788, C795–C806, C800–C815, C817–C826, C833–C844, C838–C853, C855–C864, C871–C882, C876–C891, and C893–C902. A Sushi domain is found at 696–753 (VDCGHPEEVEHATMRFNGTHVGSVALYTCEPGFSLSALSHIRVCQPQGVWSQPPQCIE). Residue N712 is glycosylated (N-linked (GlcNAc...) asparagine). Residues 753–789 (EVDECRSQPCLHGGSCQDLIADYQCLCSPGYEGVHCE) enclose the EGF-like 11; calcium-binding domain. The 37-residue stretch at 791-827 (ETDECQAQPCRNGGSCRDLPRAFICQCPEGFVGIHCE) folds into the EGF-like 12; calcium-binding domain. 2 consecutive EGF-like domains span residues 829 to 865 (EVDA…YNCE) and 867 to 903 (VSDP…KDCT). N886 is a glycosylation site (N-linked (GlcNAc...) asparagine). Fibronectin type-III domains are found at residues 908 to 1006 (PPTA…TRPR), 1007 to 1105 (PIED…TRPL), and 1106 to 1200 (PPAN…SPRD). 5 N-linked (GlcNAc...) asparagine glycosylation sites follow: N977, N1015, N1109, N1139, and N1298. The 37-residue stretch at 1306-1342 (TPGSCSEDACQNGGTCVPGADAHSCDCRPGFKGRHCE) folds into the EGF-like 15 domain. 3 cysteine pairs are disulfide-bonded: C1310/C1321, C1315/C1330, and C1332/C1341.

In terms of processing, phosphorylated on serine and threonine residues. Post-translationally, N-glycosylated. Expressed in lung.

Its subcellular location is the secreted. It localises to the extracellular space. The protein localises to the extracellular matrix. This chain is Sushi, nidogen and EGF-like domain-containing protein 1, found in Mus musculus (Mouse).